Reading from the N-terminus, the 120-residue chain is Lysozyme (120 aa).

In terms of domain architecture, C-type lysozyme spans 1 to 120 (KRFTRCGLVN…NHSNPDISSC (120 aa)). Disulfide bonds link C6–C120, C27–C110, C62–C76, and C72–C90. Catalysis depends on residues E32 and D50.

This sequence belongs to the glycosyl hydrolase 22 family. In terms of assembly, monomer.

The catalysed reaction is Hydrolysis of (1-&gt;4)-beta-linkages between N-acetylmuramic acid and N-acetyl-D-glucosamine residues in a peptidoglycan and between N-acetyl-D-glucosamine residues in chitodextrins.. Functionally, lysozymes have primarily a bacteriolytic function; those in tissues and body fluids are associated with the monocyte-macrophage system and enhance the activity of immunoagents. The chain is Lysozyme from Antheraea mylitta (Tasar silkworm).